Here is a 687-residue protein sequence, read N- to C-terminus: Triadin (687 aa).

Topologically, residues 1 to 47 (MTEITAEGNASITTTVIDNKNGSVPKSPGKVLKRTVTEDIVTTFSSP) are cytoplasmic. The helical transmembrane segment at 48 to 68 (AAWLLVIALIITWSAVAIVMF) threads the bilayer. Residues 69-687 (DLVDYKNFSA…NSPGQKQQEQ (619 aa)) are Lumenal-facing. Over residues 117–130 (DGDEDDEDADEDID) the composition is skewed to acidic residues. Disordered stretches follow at residues 117–265 (DGDE…EQKD), 280–643 (GDLK…QKSP), and 660–687 (FQFP…QQEQ). The span at 131–265 (KGEIEEPPLK…PAVPKHEQKD (135 aa)) shows a compositional bias: basic and acidic residues. The span at 295–306 (LTASRPALSTPS) shows a compositional bias: polar residues. Residues Ser303 and Ser306 each carry the phosphoserine modification. The span at 307-356 (LEEKEKEEKKKVEKKVTSDTKKKEKGEAKKKSEKETVIDGKGKEPGKPPE) shows a compositional bias: basic and acidic residues. Positions 357–370 (TKQTTTKLTTQAAA) are enriched in low complexity. Composition is skewed to basic and acidic residues over residues 371-390 (TKDE…EEKP), 396-431 (EKKE…KEEI), 442-459 (GKKE…DVKP), and 466-501 (LKKE…KEAK). Residue Asn514 is glycosylated (N-linked (GlcNAc...) asparagine). Composition is skewed to basic and acidic residues over residues 539-583 (TAEK…KVPP) and 594-630 (TRAE…DKEV). Composition is skewed to polar residues over residues 631-643 (TNNV…QKSP) and 667-687 (VQHS…QQEQ).

Homooligomer of variable subunit number; disulfide-linked. Interacts with CASQ1 in skeletal muscle. Interacts with CASQ2. Interacts with RYR1 in skeletal muscle. Post-translationally, phosphorylated by CaMK2. N-glycosylated. In terms of tissue distribution, detected in skeletal muscle (at protein level). Detected in skeletal muscle.

It localises to the sarcoplasmic reticulum membrane. The protein localises to the microsome. Its subcellular location is the cell membrane. The protein resides in the sarcolemma. In terms of biological role, contributes to the regulation of lumenal Ca2+ release via the sarcoplasmic reticulum calcium release channels RYR1 and RYR2, a key step in triggering skeletal and heart muscle contraction. Required for normal organization of the triad junction, where T-tubules and the sarcoplasmic reticulum terminal cisternae are in close contact. Required for normal skeletal muscle strength. Plays a role in excitation-contraction coupling in the heart and in regulating the rate of heart beats. The polypeptide is Triadin (Rattus norvegicus (Rat)).